Here is a 154-residue protein sequence, read N- to C-terminus: Yop proteins translocation protein O (154 aa).

Residues 132 to 154 (ELNQQHYQEEQEQEEFLQHHRNA) form a disordered region.

It belongs to the SpaM family.

Functionally, component of the yop secretion machinery. This is Yop proteins translocation protein O (yscO) from Yersinia pseudotuberculosis serotype I (strain IP32953).